Reading from the N-terminus, the 310-residue chain is Transcription initiation factor IIB (310 aa).

The segment at 9-41 (DKQTVCPECGSTELIGDYERAEVVCAHCGLVID) adopts a TFIIB-type zinc-finger fold. Zn(2+) is bound by residues cysteine 14, cysteine 17, cysteine 33, and cysteine 36. 2 repeat units span residues 127-210 (SELD…TREL) and 221-302 (DYVP…ELTE).

It belongs to the TFIIB family.

Functionally, stabilizes TBP binding to an archaeal box-A promoter. Also responsible for recruiting RNA polymerase II to the pre-initiation complex (DNA-TBP-TFIIB). In Methanobrevibacter smithii (strain ATCC 35061 / DSM 861 / OCM 144 / PS), this protein is Transcription initiation factor IIB.